The primary structure comprises 186 residues: TATA box-binding protein-like 1 (186 aa).

This sequence belongs to the TBP family. As to expression, expressed ubiquitously with highest expression in the ovary and testis.

The protein resides in the cytoplasm. The protein localises to the nucleus. Part of a specialized transcription system that mediates the transcription of most ribosomal proteins through the 5'-TCT-3' motif which is a core promoter element at these genes. Seems to also mediate the transcription of NF1. Does not bind the TATA box. Members of the TBP family are differentially required to regulate transcription and development during early embryogenesis. Particularly regulates genes that have a role in catabolism. This chain is TATA box-binding protein-like 1 (tbpl1), found in Xenopus laevis (African clawed frog).